A 361-amino-acid polypeptide reads, in one-letter code: DNA replication and repair protein RecF (361 aa).

ATP is bound at residue 30–37 (GPNGSGKT).

The protein belongs to the RecF family.

The protein resides in the cytoplasm. Its function is as follows. The RecF protein is involved in DNA metabolism; it is required for DNA replication and normal SOS inducibility. RecF binds preferentially to single-stranded, linear DNA. It also seems to bind ATP. In Yersinia enterocolitica serotype O:8 / biotype 1B (strain NCTC 13174 / 8081), this protein is DNA replication and repair protein RecF.